The chain runs to 345 residues: MAQHHLWILLLCLQTWPEAAGKDSEIFTVNGILGESVTFPVNIQEPRQVKIIAWTSKTSVAYVTPGDSETAPVVTVTHRNYYERIHALGPNYNLVISDLRMEDAGDYKADINTQADPYTTTKRYNLQIYRRLGKPKITQSLMASVNSTCNVTLTCSVEKEEKNVTYNWSPLGEEGNVLQIFQTPEDQELTYTCTAQNPVSNNSDSISARQLCADIAMGFRTHHTGLLSVLAMFFLLVLILSSVFLFRLFKRRQGRIFPEGSCLNTFTKNPYAASKKTIYTYIMASRNTQPAESRIYDEILQSKVLPSKEEPVNTVYSEVQFADKMGKASTQDSKPPGTSSYEIVI.

The signal sequence occupies residues 1–21 (MAQHHLWILLLCLQTWPEAAG). Topologically, residues 22 to 225 (KDSEIFTVNG…AMGFRTHHTG (204 aa)) are extracellular. The Ig-like V-type domain maps to 26–129 (IFTVNGILGE…TTKRYNLQIY (104 aa)). Residues 135 to 207 (PKITQSLMAS…PVSNNSDSIS (73 aa)) enclose the Ig-like C2-type domain. The N-linked (GlcNAc...) asparagine glycan is linked to asparagine 150. Cysteine 155 and cysteine 193 are disulfide-bonded. Residues 226–246 (LLSVLAMFFLLVLILSSVFLF) form a helical membrane-spanning segment. Topologically, residues 247 to 345 (RLFKRRQGRI…PGTSSYEIVI (99 aa)) are cytoplasmic. The ITSM 1 signature appears at 277 to 282 (TIYTYI). Position 279 is a phosphotyrosine (tyrosine 279). Tyrosine 296 carries the phosphotyrosine; by LYN modification. An ITSM 2 motif is present at residues 314 to 319 (TVYSEV). A Phosphotyrosine modification is found at tyrosine 316. The interval 326–345 (GKASTQDSKPPGTSSYEIVI) is disordered. The segment covering 328–345 (ASTQDSKPPGTSSYEIVI) has biased composition (polar residues). At tyrosine 341 the chain carries Phosphotyrosine; by FES.

Homodimer; via its extracellular domain. Forms a head to tail dimer with a CD48 molecule from another cell. Interacts with SH2 domain-containing proteins SH2D1A/SAP and SH2D1B/EAT-2. Interacts with tyrosine-protein phosphatases PTPN6/SHP-1 and PTPN11//SHP-2 via its phosphorylated cytoplasmic domain, and this interaction is blocked by SH2D1A. Interacts (via phosphorylated ITSM 1 and 2) with INPP5D/SHIP1. Phosphorylated by tyrosine-protein kinase LCK on tyrosine residues following ligation induced by agonist monoclonal antibody. The association with SH2D1A is dependent of tyrosine phosphorylation of its cytoplasmic domain. Phosphorylated on Tyr-296 and Tyr-316 following platelet aggregation. Phosphorylated on tyrosine residues upon high affinity immunoglobulin epsilon receptor aggregation in mast cells. Post-translationally, N-glycosylated. In terms of tissue distribution, predominantly expressed in hematopoietic tissues, such as lymph node, spleen and peripheral leukocytes. Expressed in macrophages, B-cells, monocytes, platelets, thymocytes, T-cells and dendritic cells. Highly expressed in memory T-cells. Expressed in mast cells.

The protein resides in the cell membrane. In terms of biological role, self-ligand receptor of the signaling lymphocytic activation molecule (SLAM) family. SLAM receptors triggered by homo- or heterotypic cell-cell interactions are modulating the activation and differentiation of a wide variety of immune cells and thus are involved in the regulation and interconnection of both innate and adaptive immune response. Activities are controlled by presence or absence of small cytoplasmic adapter proteins, SH2D1A/SAP and/or SH2D1B/EAT-2. Can mediate natural killer (NK) cell cytotoxicity dependent on SH2D1A and SH2D1B. Increases proliferative responses of activated T-cells and SH2D1A/SAP does not seem be required for this process. Homophilic interactions enhance interferon gamma/IFNG secretion in lymphocytes and induce platelet stimulation via a SH2D1A-dependent pathway. May serve as a marker for hematopoietic progenitor cells Required for a prolonged T-cell:B-cell contact, optimal T follicular helper function, and germinal center formation. In germinal centers involved in maintaining B-cell tolerance and in preventing autoimmunity. In mast cells negatively regulates high affinity immunoglobulin epsilon receptor signaling; independent of SH2D1A and SH2D1B but implicating FES and PTPN6/SHP-1. In macrophages enhances LPS-induced MAPK phosphorylation and NF-kappaB activation and modulates LPS-induced cytokine secretion; involving ITSM 2. Positively regulates macroautophagy in primary dendritic cells via stabilization of IRF8; inhibits TRIM21-mediated proteasomal degradation of IRF8. The protein is SLAM family member 5 (CD84) of Homo sapiens (Human).